Reading from the N-terminus, the 405-residue chain is Glucose-1-phosphate adenylyltransferase 1 (405 aa).

Alpha-D-glucose 1-phosphate contacts are provided by residues Y96, G161, E176–K177, and S194.

The protein belongs to the bacterial/plant glucose-1-phosphate adenylyltransferase family. Homotetramer.

It catalyses the reaction alpha-D-glucose 1-phosphate + ATP + H(+) = ADP-alpha-D-glucose + diphosphate. Its pathway is glycan biosynthesis; glycogen biosynthesis. In terms of biological role, involved in the biosynthesis of ADP-glucose, a building block required for the elongation reactions to produce glycogen. Catalyzes the reaction between ATP and alpha-D-glucose 1-phosphate (G1P) to produce pyrophosphate and ADP-Glc. This is Glucose-1-phosphate adenylyltransferase 1 from Vibrio parahaemolyticus serotype O3:K6 (strain RIMD 2210633).